Consider the following 308-residue polypeptide: Porphobilinogen deaminase (308 aa).

At C240 the chain carries S-(dipyrrolylmethanemethyl)cysteine.

This sequence belongs to the HMBS family. In terms of assembly, monomer. The cofactor is dipyrromethane.

It catalyses the reaction 4 porphobilinogen + H2O = hydroxymethylbilane + 4 NH4(+). It functions in the pathway porphyrin-containing compound metabolism; protoporphyrin-IX biosynthesis; coproporphyrinogen-III from 5-aminolevulinate: step 2/4. Its function is as follows. Tetrapolymerization of the monopyrrole PBG into the hydroxymethylbilane pre-uroporphyrinogen in several discrete steps. The protein is Porphobilinogen deaminase of Desulfitobacterium hafniense (strain DSM 10664 / DCB-2).